Reading from the N-terminus, the 64-residue chain is Translation machinery-associated protein 7 homolog (64 aa).

Residues 1 to 64 form a disordered region; that stretch reads MSGRQGGKAK…GGGIKKSGKK (64 aa). Residues 21–50 are a coiled coil; sequence DLSEEDVEFKKKQQEEAKKIKEMAAKAGQR. The span at 28-44 shows a compositional bias: basic and acidic residues; the sequence is EFKKKQQEEAKKIKEMA. Gly residues predominate over residues 53–64; it reads LLGGGIKKSGKK.

The protein belongs to the TMA7 family.

This is Translation machinery-associated protein 7 homolog from Caenorhabditis briggsae.